The chain runs to 236 residues: Small ribosomal subunit protein uS2c (236 aa).

This sequence belongs to the universal ribosomal protein uS2 family.

It localises to the plastid. It is found in the chloroplast. The protein is Small ribosomal subunit protein uS2c (rps2) of Illicium oligandrum (Star anise).